A 453-amino-acid polypeptide reads, in one-letter code: MMESAVDSERTMLKREIADLRAALNQKEQCLRELEDSVSFATRSEQEVVGNDLESPGGAVHTKLTNDDIARYSRQLILPDFGVQGQLKLKNSSVLIVGMGGLGCPAAQYLAAAGCGHLGLVDYDEVERSNFHRQILHSEDRCGMSKAESARIALNELNPHCEIHCHSRMLYPHNAMHIIRGYDVVLDCTDNVPTRYLLSDACVMLNKPLVSGSALKMDGQLTVYNYGNGPCYRCIFPVPPPPEAVTNCGDGGVLGAVTGTIGAMQALEAIKVIVGMGDVLAGRLLIFDGSSCVFRNIRIRSKRPNCHMCSAQPLITELINYEMFCGMHATDKNNPTLLFSTDERLSVEEYHRKIQAKPHLLIDVRPTAEFEICQLPEAVNVPLVEILDDSYLKRLGKQLEDKELPVVLLCRRGNDSQIAVQHLRNRFPKHFVRDLIGGLHAWTSNIDPNFPIY.

Phosphothreonine is present on T62. ATP-binding positions include G101, D122, 129 to 133, K146, and 190 to 191; these read SNFHR and DN. Zn(2+)-binding residues include C231 and C234. C248 (glycyl thioester intermediate; for adenylyltransferase activity) is an active-site residue. The Zn(2+) site is built by C306 and C309. The region spanning 355–451 is the Rhodanese domain; that stretch reads QAKPHLLIDV…WTSNIDPNFP (97 aa). The Cysteine persulfide intermediate; for sulfurtransferase activity role is filled by C410.

In the N-terminal section; belongs to the HesA/MoeB/ThiF family. UBA4 subfamily. The cofactor is Zn(2+).

It is found in the cytoplasm. The protein localises to the cytosol. The catalysed reaction is [molybdopterin-synthase sulfur-carrier protein]-C-terminal Gly-Gly + ATP + H(+) = [molybdopterin-synthase sulfur-carrier protein]-C-terminal Gly-Gly-AMP + diphosphate. It carries out the reaction [molybdopterin-synthase sulfur-carrier protein]-C-terminal Gly-Gly-AMP + S-sulfanyl-L-cysteinyl-[cysteine desulfurase] + AH2 = [molybdopterin-synthase sulfur-carrier protein]-C-terminal-Gly-aminoethanethioate + L-cysteinyl-[cysteine desulfurase] + A + AMP + 2 H(+). It participates in tRNA modification; 5-methoxycarbonylmethyl-2-thiouridine-tRNA biosynthesis. Its pathway is cofactor biosynthesis; molybdopterin biosynthesis. In terms of biological role, plays a central role in 2-thiolation of mcm(5)S(2)U at tRNA wobble positions of cytosolic tRNA(Lys), tRNA(Glu) and tRNA(Gln). Also essential during biosynthesis of the molybdenum cofactor. Acts by mediating the C-terminal thiocarboxylation of sulfur carriers URM1 and MOCS2A. Its N-terminus first activates URM1 and MOCS2A as acyl-adenylates (-COAMP), then the persulfide sulfur on the catalytic cysteine is transferred to URM1 and MOCS2A to form thiocarboxylation (-COSH) of their C-terminus. The reaction probably involves hydrogen sulfide that is generated from the persulfide intermediate and that acts as a nucleophile towards URM1 and MOCS2A. Subsequently, a transient disulfide bond is formed. Does not use thiosulfate as sulfur donor; NFS1 probably acting as a sulfur donor for thiocarboxylation reactions. This is Adenylyltransferase and sulfurtransferase MOCS3 from Drosophila sechellia (Fruit fly).